Here is an 86-residue protein sequence, read N- to C-terminus: Anti-adapter protein IraP (86 aa).

Residues 1–36 are a coiled coil; the sequence is MKNLIAELLFKLAQKEEESKELCAQVEALEIIVTAM.

This sequence belongs to the IraP family. As to quaternary structure, interacts with RssB.

The protein resides in the cytoplasm. Its function is as follows. Inhibits RpoS proteolysis by regulating RssB activity, thereby increasing the stability of the sigma stress factor RpoS especially during phosphate starvation, but also in stationary phase and during nitrogen starvation. Its effect on RpoS stability is due to its interaction with RssB, which probably blocks the interaction of RssB with RpoS, and the consequent delivery of the RssB-RpoS complex to the ClpXP protein degradation pathway. The polypeptide is Anti-adapter protein IraP (Shigella sonnei (strain Ss046)).